Reading from the N-terminus, the 352-residue chain is Alanine racemase (352 aa).

Lys-33 (proton acceptor; specific for D-alanine) is an active-site residue. Lys-33 bears the N6-(pyridoxal phosphate)lysine mark. Residue Arg-129 participates in substrate binding. The Proton acceptor; specific for L-alanine role is filled by Tyr-250. Residue Met-298 coordinates substrate.

It belongs to the alanine racemase family. Pyridoxal 5'-phosphate serves as cofactor.

The catalysed reaction is L-alanine = D-alanine. The protein operates within amino-acid biosynthesis; D-alanine biosynthesis; D-alanine from L-alanine: step 1/1. In terms of biological role, catalyzes the interconversion of L-alanine and D-alanine. May also act on other amino acids. The protein is Alanine racemase (alr) of Neisseria meningitidis serogroup A / serotype 4A (strain DSM 15465 / Z2491).